A 2699-amino-acid chain; its full sequence is UPF0648 protein C3H5.09c (2699 aa).

N-linked (GlcNAc...) asparagine glycosylation occurs at Asn21. Residues 24–44 traverse the membrane as a helical segment; sequence FVWVVIATGFLFHLVLFVLSY. Residues Asn288, Asn293, Asn334, Asn345, Asn433, Asn507, Asn551, Asn655, Asn760, Asn993, Asn1000, Asn1003, Asn1006, and Asn1009 are each glycosylated (N-linked (GlcNAc...) asparagine). The segment at 975-1021 is disordered; that stretch reads KAKDPSPKSASESSSFYQNGSDIDDNDSNSSNTSNHTTENANAQQRK. The span at 981-995 shows a compositional bias: low complexity; that stretch reads PKSASESSSFYQNGS. A coiled-coil region spans residues 1006 to 1033; that stretch reads NTSNHTTENANAQQRKLEDLNRSFEDFL. Over residues 1010-1019 the composition is skewed to polar residues; that stretch reads HTTENANAQQ. N-linked (GlcNAc...) asparagine glycosylation is found at Asn1026, Asn1039, Asn1046, Asn1236, Asn1255, Asn1344, Asn1527, Asn1595, Asn1791, Asn1916, Asn2032, Asn2048, Asn2256, Asn2285, Asn2388, Asn2407, Asn2417, Asn2508, and Asn2622. The stretch at 1758-1818 forms a coiled coil; the sequence is QYELLQKRRK…TLSDHYRLLE (61 aa). The disordered stretch occupies residues 2393–2447; that stretch reads FPHIYSRNHDKRKENGSQGEADNSNYSGSLMRRRTNDQEEDALATPSSSRRDSRS. Polar residues predominate over residues 2408–2420; sequence GSQGEADNSNYSG. 2 disordered regions span residues 2606 to 2632 and 2647 to 2676; these read AEENQEEGSPASAISRNHSTRSSLNSP and ADIVKRHIPPTINGKRSKNKGNEGSNARVD. Residues 2617–2632 are compositionally biased toward polar residues; that stretch reads SAISRNHSTRSSLNSP.

The protein belongs to the UPF0648 family.

The protein resides in the membrane. This Schizosaccharomyces pombe (strain 972 / ATCC 24843) (Fission yeast) protein is UPF0648 protein C3H5.09c.